Consider the following 304-residue polypeptide: Glutaminase (304 aa).

Positions 63, 114, 158, 165, 189, 240, and 258 each coordinate substrate.

The protein belongs to the glutaminase family. As to quaternary structure, homotetramer.

It carries out the reaction L-glutamine + H2O = L-glutamate + NH4(+). In Shewanella baltica (strain OS155 / ATCC BAA-1091), this protein is Glutaminase.